Consider the following 144-residue polypeptide: Flagellar assembly factor FliW (144 aa).

The protein belongs to the FliW family. As to quaternary structure, interacts with translational regulator CsrA and flagellin(s).

It localises to the cytoplasm. Its function is as follows. Acts as an anti-CsrA protein, binds CsrA and prevents it from repressing translation of its target genes, one of which is flagellin. Binds to flagellin and participates in the assembly of the flagellum. The sequence is that of Flagellar assembly factor FliW from Geobacillus sp. (strain WCH70).